Consider the following 358-residue polypeptide: WD repeat-containing protein 53 (358 aa).

WD repeat units lie at residues 8-46 (GHSSPILCLNASQEGLVASGAEGGDLVVWGEDGTLLGHT), 92-131 (VNEEEINCLSLNETENLLASADDSGTIKILDLENKKISRS), 134-174 (RHSN…PLWI), 195-234 (LNPALAHSVSVASCGNVFSCGAEDGKVRIFRVMGVKCEQE), and 239-278 (GHSLGVSQVCFLRESYLLLTGGNDGKIKLWDVSSEIEKKH). A compositionally biased stretch (basic residues) spans 278-294 (HKSPTKHTHRKKTKRAA). Residues 278 to 309 (HKSPTKHTHRKKTKRAAYTKQGGGTHASVTGE) form a disordered region.

It belongs to the WD repeat WDR53 family.

The chain is WD repeat-containing protein 53 (WDR53) from Bos taurus (Bovine).